A 211-amino-acid polypeptide reads, in one-letter code: 3-demethoxyubiquinol 3-hydroxylase (211 aa).

A disordered region spans residues 22–43 (KHPLNPNRKSPSANTVDGQLSD). Residues 28-42 (NRKSPSANTVDGQLS) show a composition bias toward polar residues. Residues E60, E90, H93, E142, E174, and H177 each contribute to the Fe cation site.

The protein belongs to the COQ7 family. Fe cation is required as a cofactor.

It is found in the cell membrane. The catalysed reaction is a 5-methoxy-2-methyl-3-(all-trans-polyprenyl)benzene-1,4-diol + AH2 + O2 = a 3-demethylubiquinol + A + H2O. It participates in cofactor biosynthesis; ubiquinone biosynthesis. Catalyzes the hydroxylation of 2-nonaprenyl-3-methyl-6-methoxy-1,4-benzoquinol during ubiquinone biosynthesis. This chain is 3-demethoxyubiquinol 3-hydroxylase, found in Francisella philomiragia subsp. philomiragia (strain ATCC 25017 / CCUG 19701 / FSC 153 / O#319-036).